Reading from the N-terminus, the 190-residue chain is HTH-type transcriptional repressor CutR (190 aa).

One can recognise an HTH deoR-type domain in the interval 3 to 58 (PINRQQHILKWLKEEGSLRISDISARFGVSEMTVYRDVNQLVQSNQVIKTAGGITL). A DNA-binding region (H-T-H motif) is located at residues 20–39 (LRISDISARFGVSEMTVYRD).

It is found in the cytoplasm. In terms of biological role, may act as a negative transcriptional regulator of cutJ/ycnJ in the presence of copper. May use copper as a corepressor. This Bacillus subtilis (strain 168) protein is HTH-type transcriptional repressor CutR.